The primary structure comprises 61 residues: Disintegrin rubistatin (61 aa).

A Disintegrin domain is found at 1–61; that stretch reads NPCCDAATCK…ADCPRNGLYG (61 aa). Disulfide bonds link cysteine 3/cysteine 26, cysteine 17/cysteine 23, cysteine 22/cysteine 47, and cysteine 35/cysteine 54. The short motif at 39–41 is the Cell attachment site; atypical (MVD) element; the sequence is MVD.

This sequence belongs to the venom metalloproteinase (M12B) family. P-II subfamily. P-IIa sub-subfamily. Monomer. In terms of tissue distribution, expressed by the venom gland.

Its subcellular location is the secreted. Functionally, recombinant disintegrin rubistatin inhibits ADP-induced platelet aggregation. In addition, it strongly induces apoptosis, and inhibits cell migration and proliferation of the human cancer cell line SK-Mel-28. In Crotalus ruber ruber (Red diamond rattlesnake), this protein is Disintegrin rubistatin.